The following is a 949-amino-acid chain: Glycine dehydrogenase (decarboxylating) (949 aa).

At Lys-704 the chain carries N6-(pyridoxal phosphate)lysine.

The protein belongs to the GcvP family. In terms of assembly, the glycine cleavage system is composed of four proteins: P, T, L and H. It depends on pyridoxal 5'-phosphate as a cofactor.

It catalyses the reaction N(6)-[(R)-lipoyl]-L-lysyl-[glycine-cleavage complex H protein] + glycine + H(+) = N(6)-[(R)-S(8)-aminomethyldihydrolipoyl]-L-lysyl-[glycine-cleavage complex H protein] + CO2. Its function is as follows. The glycine cleavage system catalyzes the degradation of glycine. The P protein binds the alpha-amino group of glycine through its pyridoxal phosphate cofactor; CO(2) is released and the remaining methylamine moiety is then transferred to the lipoamide cofactor of the H protein. This chain is Glycine dehydrogenase (decarboxylating), found in Bacteroides thetaiotaomicron (strain ATCC 29148 / DSM 2079 / JCM 5827 / CCUG 10774 / NCTC 10582 / VPI-5482 / E50).